Here is a 201-residue protein sequence, read N- to C-terminus: Probable chemoreceptor glutamine deamidase CheD 1 (201 aa).

This sequence belongs to the CheD family.

The catalysed reaction is L-glutaminyl-[protein] + H2O = L-glutamyl-[protein] + NH4(+). Probably deamidates glutamine residues to glutamate on methyl-accepting chemotaxis receptors (MCPs), playing an important role in chemotaxis. The chain is Probable chemoreceptor glutamine deamidase CheD 1 from Dechloromonas aromatica (strain RCB).